The following is a 309-amino-acid chain: Protein FdhE (309 aa).

This sequence belongs to the FdhE family.

It is found in the cytoplasm. Its function is as follows. Necessary for formate dehydrogenase activity. The polypeptide is Protein FdhE (Shigella boydii serotype 18 (strain CDC 3083-94 / BS512)).